The sequence spans 915 residues: Bifunctional uridylyltransferase/uridylyl-removing enzyme (915 aa).

The tract at residues 1–360 is uridylyltransferase; that stretch reads MFNCAVTAID…PDEERPKKQP (360 aa). Residues 361-731 are uridylyl-removing; that stretch reads INARFNQVGE…EHRELALDAV (371 aa). Residues 478-594 enclose the HD domain; the sequence is VDAHTLFLIR…TLFADLVGNV (117 aa). ACT domains are found at residues 732-817 and 840-915; these read QVFV…RIPR and IMSL…NDSI.

The protein belongs to the GlnD family. Mg(2+) is required as a cofactor.

It carries out the reaction [protein-PII]-L-tyrosine + UTP = [protein-PII]-uridylyl-L-tyrosine + diphosphate. It catalyses the reaction [protein-PII]-uridylyl-L-tyrosine + H2O = [protein-PII]-L-tyrosine + UMP + H(+). With respect to regulation, uridylyltransferase (UTase) activity is inhibited by glutamine, while glutamine activates uridylyl-removing (UR) activity. Its function is as follows. Modifies, by uridylylation and deuridylylation, the PII regulatory proteins (GlnB and homologs), in response to the nitrogen status of the cell that GlnD senses through the glutamine level. Under low glutamine levels, catalyzes the conversion of the PII proteins and UTP to PII-UMP and PPi, while under higher glutamine levels, GlnD hydrolyzes PII-UMP to PII and UMP (deuridylylation). Thus, controls uridylylation state and activity of the PII proteins, and plays an important role in the regulation of nitrogen assimilation and metabolism. The sequence is that of Bifunctional uridylyltransferase/uridylyl-removing enzyme from Psychrobacter arcticus (strain DSM 17307 / VKM B-2377 / 273-4).